The primary structure comprises 200 residues: Holliday junction branch migration complex subunit RuvA (200 aa).

The domain I stretch occupies residues 1 to 64 (MYAYFRGELI…EDLMQLYGFI (64 aa)). The tract at residues 65 to 143 (EEEERQLFLL…KLQQTRPGKT (79 aa)) is domain II. Residues 144–154 (AGAGSVASLSE) are flexible linker. The segment at 154–200 (EDALQALMTLGFSRASAQQAVTRALLSAENPGVEDIVREALQNIRNH) is domain III.

This sequence belongs to the RuvA family. In terms of assembly, homotetramer. Forms an RuvA(8)-RuvB(12)-Holliday junction (HJ) complex. HJ DNA is sandwiched between 2 RuvA tetramers; dsDNA enters through RuvA and exits via RuvB. An RuvB hexamer assembles on each DNA strand where it exits the tetramer. Each RuvB hexamer is contacted by two RuvA subunits (via domain III) on 2 adjacent RuvB subunits; this complex drives branch migration. In the full resolvosome a probable DNA-RuvA(4)-RuvB(12)-RuvC(2) complex forms which resolves the HJ.

Its subcellular location is the cytoplasm. The RuvA-RuvB-RuvC complex processes Holliday junction (HJ) DNA during genetic recombination and DNA repair, while the RuvA-RuvB complex plays an important role in the rescue of blocked DNA replication forks via replication fork reversal (RFR). RuvA specifically binds to HJ cruciform DNA, conferring on it an open structure. The RuvB hexamer acts as an ATP-dependent pump, pulling dsDNA into and through the RuvAB complex. HJ branch migration allows RuvC to scan DNA until it finds its consensus sequence, where it cleaves and resolves the cruciform DNA. The chain is Holliday junction branch migration complex subunit RuvA from Prosthecochloris aestuarii (strain DSM 271 / SK 413).